A 133-amino-acid chain; its full sequence is Putative dispanin subfamily A member 2d (133 aa).

Residues 1–57 (MNHTVQTFFSPVNSGQPPNYEMLKEEHKVAVLGVPHNPAPPTSTVIHIRSKTSVPHH) are Extracellular-facing. Lys24 is covalently cross-linked (Glycyl lysine isopeptide (Lys-Gly) (interchain with G-Cter in ubiquitin)). A helical transmembrane segment spans residues 58-78 (VVWSLFNTLFMNPCCLGFIAF). Residues 79-107 (AYSVKSRDRKMVGNVTGAQAYASTTKCLN) are Cytoplasmic-facing. Residues Lys83, Lys88, and Lys104 each participate in a glycyl lysine isopeptide (Lys-Gly) (interchain with G-Cter in ubiquitin) cross-link. Residues 108–128 (IWALILGILMTILLIIIPVLI) traverse the membrane as a helical segment. Topologically, residues 129-133 (FQAHR) are extracellular.

Belongs to the CD225/Dispanin family.

The protein localises to the membrane. This Homo sapiens (Human) protein is Putative dispanin subfamily A member 2d.